A 597-amino-acid polypeptide reads, in one-letter code: 66 kDa protein (597 aa).

Disordered regions lie at residues 62-82 (VRLQ…PSLQ), 160-198 (HSVP…FRQH), 218-315 (NQLA…SCRV), 329-411 (HFKS…LHHD), and 535-586 (SSPQ…ASAL). Positions 64 to 80 (LQSSPPRGPQSDRNLPS) are enriched in polar residues. A compositionally biased stretch (polar residues) spans 218–234 (NQLAQAQQHPLPSSKPL). The segment covering 273–291 (PSSRGHLPSSTSSSSPRSN) has biased composition (low complexity). Residues 305–315 (SNSQDLRSCRV) show a composition bias toward polar residues. The span at 389–400 (QTHHARLPHSKR) shows a compositional bias: basic residues. Residues 535-574 (SSPQSHSSESLRGDSPPSSHLPSSPSSACSGDSFASCSSF) show a composition bias toward low complexity. Positions 575–584 (GPSNPTSSAS) are enriched in polar residues.

The protein belongs to the tymoviridae protein p69 family.

The sequence is that of 66 kDa protein from Ononis.